The chain runs to 334 residues: Ornithine carbamoyltransferase, catabolic (334 aa).

Carbamoyl phosphate is bound by residues 57-60 (STRT), Q84, R108, and 135-138 (HPTQ). Residues N168, D232, and 236–237 (SM) contribute to the L-ornithine site. Carbamoyl phosphate contacts are provided by residues 274 to 275 (CL) and R320.

It belongs to the aspartate/ornithine carbamoyltransferase superfamily. OTCase family.

Its subcellular location is the cytoplasm. It carries out the reaction carbamoyl phosphate + L-ornithine = L-citrulline + phosphate + H(+). It functions in the pathway amino-acid degradation; L-arginine degradation via ADI pathway; carbamoyl phosphate from L-arginine: step 2/2. Its function is as follows. Reversibly catalyzes the transfer of the carbamoyl group from carbamoyl phosphate (CP) to the N(epsilon) atom of ornithine (ORN) to produce L-citrulline. The sequence is that of Ornithine carbamoyltransferase, catabolic (arcB) from Rhizobium meliloti (strain 1021) (Ensifer meliloti).